A 274-amino-acid chain; its full sequence is HTH-type transcriptional regulator GadX (274 aa).

Residues 145 to 242 (TRVCTVINNN…GMTPTEYQER (98 aa)) enclose the HTH araC/xylS-type domain. DNA-binding regions (H-T-H motif) lie at residues 162–183 (ARIASELLMSPSLLKKKLREEG) and 209–232 (IKRVAVSCGYHSVSYFIYVFRNYY).

In terms of assembly, homodimer.

Functionally, positively regulates the expression of about fifteen genes involved in acid resistance such as gadA, gadB and gadC. Depending on the conditions (growth phase and medium), can repress gadW. Negatively regulates perA expression in acidic conditions and positively regulates it in alkaline conditions. The sequence is that of HTH-type transcriptional regulator GadX (gadX) from Escherichia coli O127:H6 (strain E2348/69 / EPEC).